A 371-amino-acid polypeptide reads, in one-letter code: N-acetyldiaminopimelate deacetylase (371 aa).

The active site involves Asp68. Residue Glu127 is the Proton acceptor of the active site.

This sequence belongs to the peptidase M20A family. N-acetyldiaminopimelate deacetylase subfamily.

It catalyses the reaction N-acetyl-(2S,6S)-2,6-diaminopimelate + H2O = (2S,6S)-2,6-diaminopimelate + acetate. Its pathway is amino-acid biosynthesis; L-lysine biosynthesis via DAP pathway; LL-2,6-diaminopimelate from (S)-tetrahydrodipicolinate (acetylase route): step 3/3. In terms of biological role, catalyzes the conversion of N-acetyl-diaminopimelate to diaminopimelate and acetate. This chain is N-acetyldiaminopimelate deacetylase, found in Listeria innocua serovar 6a (strain ATCC BAA-680 / CLIP 11262).